The sequence spans 310 residues: p-hydroxybenzoic acid efflux pump subunit AaeA (310 aa).

Residues Ala-12–Tyr-32 traverse the membrane as a helical segment.

Belongs to the membrane fusion protein (MFP) (TC 8.A.1) family.

Its subcellular location is the cell inner membrane. Its function is as follows. Forms an efflux pump with AaeB. This chain is p-hydroxybenzoic acid efflux pump subunit AaeA, found in Shigella sonnei (strain Ss046).